Reading from the N-terminus, the 217-residue chain is Probable GTP-binding protein EngB (217 aa).

Residues 33–217 enclose the EngB-type G domain; sequence GPTEIAFAGR…RAAIELAVAR (185 aa). GTP is bound by residues 41–48, 68–72, 95–98, 162–165, and 196–198; these read GRSNVGKS, GRTQE, DMPG, TKTD, and TSS. The Mg(2+) site is built by Ser-48 and Thr-70.

Belongs to the TRAFAC class TrmE-Era-EngA-EngB-Septin-like GTPase superfamily. EngB GTPase family. The cofactor is Mg(2+).

Functionally, necessary for normal cell division and for the maintenance of normal septation. The polypeptide is Probable GTP-binding protein EngB (Sinorhizobium medicae (strain WSM419) (Ensifer medicae)).